The following is a 385-amino-acid chain: Cytochrome b (385 aa).

4 consecutive transmembrane segments (helical) span residues 34–54 (FGSLTGLCLALQIISGLLLTM), 78–99 (WFIRNVHISGASLFFTCMFIHI), 114–134 (WYSGVILFILSMLTAFLGYVL), and 179–199 (FLVLHFLMPFSMIAVSLIHLV). Heme b-binding residues include His-84 and His-98. Heme b is bound by residues His-183 and His-197. Residue His-202 participates in a ubiquinone binding. Transmembrane regions (helical) follow at residues 227–247 (FKDILGFSFLLTFLITFSLLL), 289–309 (LAGIIALVMSLSVLLLMPILI), 321–341 (LMQVTFWLMVCNFIFLSWLGA), and 348–368 (FILMSQISSFIYFFIFFVMFP).

It belongs to the cytochrome b family. As to quaternary structure, the cytochrome bc1 complex contains 3 respiratory subunits (MT-CYB, CYC1 and UQCRFS1), 2 core proteins (UQCRC1 and UQCRC2) and probably 6 low-molecular weight proteins. Heme b serves as cofactor.

It localises to the mitochondrion inner membrane. Its function is as follows. Component of the ubiquinol-cytochrome c reductase complex (complex III or cytochrome b-c1 complex) that is part of the mitochondrial respiratory chain. The b-c1 complex mediates electron transfer from ubiquinol to cytochrome c. Contributes to the generation of a proton gradient across the mitochondrial membrane that is then used for ATP synthesis. The protein is Cytochrome b (MT-CYB) of Eptatretus burgeri (Inshore hagfish).